A 229-amino-acid polypeptide reads, in one-letter code: Putative N-acetylmannosamine-6-phosphate 2-epimerase (229 aa).

The protein belongs to the NanE family.

It catalyses the reaction an N-acyl-D-glucosamine 6-phosphate = an N-acyl-D-mannosamine 6-phosphate. Its pathway is amino-sugar metabolism; N-acetylneuraminate degradation; D-fructose 6-phosphate from N-acetylneuraminate: step 3/5. Functionally, converts N-acetylmannosamine-6-phosphate (ManNAc-6-P) to N-acetylglucosamine-6-phosphate (GlcNAc-6-P). The chain is Putative N-acetylmannosamine-6-phosphate 2-epimerase from Actinobacillus pleuropneumoniae serotype 5b (strain L20).